The primary structure comprises 135 residues: Protein NrdI (135 aa).

Belongs to the NrdI family.

In terms of biological role, probably involved in ribonucleotide reductase function. This Rhizobium johnstonii (strain DSM 114642 / LMG 32736 / 3841) (Rhizobium leguminosarum bv. viciae) protein is Protein NrdI.